A 352-amino-acid chain; its full sequence is Phosphate acyltransferase (352 aa).

Belongs to the PlsX family. As to quaternary structure, homodimer. Probably interacts with PlsY.

Its subcellular location is the cytoplasm. It catalyses the reaction a fatty acyl-[ACP] + phosphate = an acyl phosphate + holo-[ACP]. The protein operates within lipid metabolism; phospholipid metabolism. Catalyzes the reversible formation of acyl-phosphate (acyl-PO(4)) from acyl-[acyl-carrier-protein] (acyl-ACP). This enzyme utilizes acyl-ACP as fatty acyl donor, but not acyl-CoA. In Bordetella bronchiseptica (strain ATCC BAA-588 / NCTC 13252 / RB50) (Alcaligenes bronchisepticus), this protein is Phosphate acyltransferase.